An 81-amino-acid polypeptide reads, in one-letter code: Conotoxin ArMKLT2-0311 (81 aa).

Residues 1 to 22 (MKLTCVLIVALLFLTACQLTTA) form the signal peptide. Residues 23–34 (DDSRDKQEDPLV) are compositionally biased toward basic and acidic residues. Residues 23–45 (DDSRDKQEDPLVRSHRKMQKSED) form a disordered region. The propeptide occupies 23–51 (DDSRDKQEDPLVRSHRKMQKSEDPKMAER). Intrachain disulfides connect Cys-52/Cys-67, Cys-59/Cys-71, and Cys-66/Cys-80.

It belongs to the conotoxin O1 superfamily. As to expression, expressed by the venom duct.

It is found in the secreted. In Conus arenatus (Sand-dusted cone), this protein is Conotoxin ArMKLT2-0311.